A 223-amino-acid chain; its full sequence is Neurotrophic factor BDNF precursor form (223 aa).

The first 5 residues, 1–5 (SCMKA), serve as a signal peptide directing secretion. Residues 6–114 (APMKEVSIRG…AANMSMRVRR (109 aa)) constitute a propeptide that is removed on maturation. Asn-107 carries N-linked (GlcNAc...) asparagine glycosylation. Cystine bridges form between Cys-127–Cys-194 and Cys-172–Cys-223.

This sequence belongs to the NGF-beta family.

It is found in the secreted. Promotes the survival of neuronal populations that are all located either in the central nervous system or directly connected to it. The protein is Neurotrophic factor BDNF precursor form (BDNF) of Chilabothrus striatus (Haitian boa constrictor).